Here is a 342-residue protein sequence, read N- to C-terminus: Glucokinase (342 aa).

Residue 7-12 coordinates ATP; sequence GDIGGT.

Belongs to the bacterial glucokinase family.

It localises to the cytoplasm. The enzyme catalyses D-glucose + ATP = D-glucose 6-phosphate + ADP + H(+). The polypeptide is Glucokinase (Trichormus variabilis (strain ATCC 29413 / PCC 7937) (Anabaena variabilis)).